The following is a 71-amino-acid chain: Large ribosomal subunit protein uL30 (71 aa).

Belongs to the universal ribosomal protein uL30 family. As to quaternary structure, part of the 50S ribosomal subunit.

The sequence is that of Large ribosomal subunit protein uL30 from Borreliella burgdorferi (strain ATCC 35210 / DSM 4680 / CIP 102532 / B31) (Borrelia burgdorferi).